We begin with the raw amino-acid sequence, 503 residues long: Aromatase 1 (503 aa).

C437 is a binding site for heme.

This sequence belongs to the cytochrome P450 family. Heme serves as cofactor.

The protein localises to the membrane. It carries out the reaction testosterone + 3 reduced [NADPH--hemoprotein reductase] + 3 O2 = 17beta-estradiol + formate + 3 oxidized [NADPH--hemoprotein reductase] + 4 H2O + 4 H(+). The enzyme catalyses androst-4-ene-3,17-dione + 3 reduced [NADPH--hemoprotein reductase] + 3 O2 = estrone + formate + 3 oxidized [NADPH--hemoprotein reductase] + 4 H2O + 4 H(+). Functionally, catalyzes the formation of aromatic C18 estrogens from C19 androgens. The sequence is that of Aromatase 1 (CYP19A1) from Sus scrofa (Pig).